The primary structure comprises 488 residues: Probable glycine dehydrogenase (decarboxylating) subunit 2 (488 aa).

The residue at position 274 (Lys-274) is an N6-(pyridoxal phosphate)lysine.

The protein belongs to the GcvP family. C-terminal subunit subfamily. In terms of assembly, the glycine cleavage system is composed of four proteins: P, T, L and H. In this organism, the P 'protein' is a heterodimer of two subunits. The cofactor is pyridoxal 5'-phosphate.

The catalysed reaction is N(6)-[(R)-lipoyl]-L-lysyl-[glycine-cleavage complex H protein] + glycine + H(+) = N(6)-[(R)-S(8)-aminomethyldihydrolipoyl]-L-lysyl-[glycine-cleavage complex H protein] + CO2. The glycine cleavage system catalyzes the degradation of glycine. The P protein binds the alpha-amino group of glycine through its pyridoxal phosphate cofactor; CO(2) is released and the remaining methylamine moiety is then transferred to the lipoamide cofactor of the H protein. The protein is Probable glycine dehydrogenase (decarboxylating) subunit 2 of Listeria monocytogenes serotype 4b (strain F2365).